The primary structure comprises 147 residues: UPF0306 protein YhbP (147 aa).

Belongs to the UPF0306 family.

The protein is UPF0306 protein YhbP of Shigella dysenteriae serotype 1 (strain Sd197).